The chain runs to 208 residues: ATP-dependent Clp protease proteolytic subunit (208 aa).

S98 (nucleophile) is an active-site residue. Residue H123 is part of the active site.

The protein belongs to the peptidase S14 family. Fourteen ClpP subunits assemble into 2 heptameric rings which stack back to back to give a disk-like structure with a central cavity, resembling the structure of eukaryotic proteasomes.

It localises to the cytoplasm. The enzyme catalyses Hydrolysis of proteins to small peptides in the presence of ATP and magnesium. alpha-casein is the usual test substrate. In the absence of ATP, only oligopeptides shorter than five residues are hydrolyzed (such as succinyl-Leu-Tyr-|-NHMec, and Leu-Tyr-Leu-|-Tyr-Trp, in which cleavage of the -Tyr-|-Leu- and -Tyr-|-Trp bonds also occurs).. In terms of biological role, cleaves peptides in various proteins in a process that requires ATP hydrolysis. Has a chymotrypsin-like activity. Plays a major role in the degradation of misfolded proteins. The sequence is that of ATP-dependent Clp protease proteolytic subunit from Wolbachia pipientis subsp. Culex pipiens (strain wPip).